Here is a 550-residue protein sequence, read N- to C-terminus: MTTEDNQRWSQVSPDLAKRPLVGVEKVLNYTEYYQNGNFQLTIALLFETSVASETLCERFPLALWSVRSKLPELGTSTVSNDQSAELDLDHALWQPIRSLEQAQQWLDDTGVIVNDGTSVQQMVDRLSNRRIEPIGKQFRVYLVCDPLYGAPGLIVNASHVLNGHRALFQGESIFKALLSPRISDATRQNPDAKAALAAIFKPEELNEALPKLPQSLNTAYADKFQPGAPEIEAGFHKVGEKLSNGAQPSIGIPRFQIPSAKPAFSLGSLDGTPMSMLNLRSRINAADNQSLKRACKKYGASVPSLVYACIVNSIDRHCGSSSSEAVLGANLAYSAHASRWMPAETFEERSPVNMAIVLGSGYLSPEELQPGQRGRNLGEAGLFALARTIRKKQDDFLDTPHIIGAMSDLGEQVSSQLAEVAERQREAGTDARVALSENSPLVCPPTLTSQGVITVKRFYTAQGASDELHLEQPADEHLEFFDICTGGRTTDASVCFAMFTHVGALTLQAHFDSHFFDAQLVRNILDDVVSQLGSAAASASLTSQDQAKL.

The protein belongs to the trichothecene O-acetyltransferase family.

Its pathway is secondary metabolite biosynthesis. Acyl-CoA-dependent acyltransferase; part of the gene cluster that mediates the biosynthesis of mannosylerythritol lipids (MELs), surface-active substances that enhance the availability of water-insoluble substrates. Depending on the number of acetyl groups, mannosylerythritol lipids can be differentiated into MEL A (fully acetylated), MEL B and MEL C (monoacetylated at R-6 and R-4, respectively), and the fully deacetylated MEL D. The first step in the pathway is the generation of mannosylerythritol by the glycosyltransferase EMT1 which catalyzes the transfer of GDP-mannose to the C-4 atom of meso-erythritol. This reaction has to be stereospecific, since only mannosyl-D-erythritol is generated. The produced disaccharide is subsequently acylated with fatty acids of various lengths by the acyltransferases MAC1 and MAC2 at positions C-2 and C-3, repectively. The existence of MEL derivatives which carry an acetyl group at C-2 implies that at least MAC1 also accepts acetyl-CoA as a donor. The final step of MEL biosynthesis is the acetylation of the fully acylated mannosylerythritol lipids catalyzed by the acetyl-CoA-dependent acetyltransferase MAT1. MAT1 displays a relaxed regioselectivity and is able to transfer acetylgroups to both positions C-4 and C-6 of the mannosyl moiety. The sequence is that of Acyl-CoA-dependent acyltransferase MAC2 from Pseudozyma antarctica (strain T-34) (Yeast).